The sequence spans 173 residues: MIRIPFRLRPPPGRTLHSLVRTFASTKPADLTGTQEKNTRQKINFHELKHPSKVPQRPHKSTTTVGQSTPTRIPVDAQTVQLLERLSLVDLDSAEAHRTLEDAIEFASQILSVDTEGVEPLYTVLERERLTLREDRVTDGNIQQDVLRNARVTEEEYFVAPPGNIPLEQEPRK.

The N-terminal 23 residues, 1–23 (MIRIPFRLRPPPGRTLHSLVRTF), are a transit peptide targeting the mitochondrion. Residues 51-70 (PSKVPQRPHKSTTTVGQSTP) are disordered. Polar residues predominate over residues 61–70 (STTTVGQSTP).

It belongs to the GatC family. As to quaternary structure, subunit of the heterotrimeric GatCAB amidotransferase (AdT) complex, composed of A, B and C subunits.

It is found in the mitochondrion. It catalyses the reaction L-glutamyl-tRNA(Gln) + L-glutamine + ATP + H2O = L-glutaminyl-tRNA(Gln) + L-glutamate + ADP + phosphate + H(+). Its function is as follows. Allows the formation of correctly charged Gln-tRNA(Gln) through the transamidation of misacylated Glu-tRNA(Gln) in the mitochondria. The reaction takes place in the presence of glutamine and ATP through an activated gamma-phospho-Glu-tRNA(Gln). The polypeptide is Glutamyl-tRNA(Gln) amidotransferase subunit C-1, mitochondrial (Culex quinquefasciatus (Southern house mosquito)).